The chain runs to 439 residues: MLTDRHKEVLKGLLAGILFYLSFSKLNLYFLVFPALFLGIRKNFLRLFSFGFSAFFLSLLWIRIPLIDYGNINPFIAYPALVLLVLFLSLYQFGLTYLLWRVFKFSFFAFPFLYTLVEILRSHLPYGGFPWLLLGVNLVDIPVLRYTLNAGTVFLGSFVVLLISLFPLFNKKEKIFSLAIITPLLIYGFIKETSYRVTHYGLKIALIQPFVPQDVKLNRELFELKYGEIIELVKKAVEKKPDLVVLPESAFPFYLGELEEKGKEILELSKKVPIITGFIEIDEGFKPYNTVVLLKDGRVIEKYRKIKLVPFGEYTPFPFKFFSKYVPYLSFEDYNRGNKVKCFQLNGFSIGTPVCFEVAYPFFVKSFGCEFIAVLTNDAWFRDSEGTFQHMKLARVRAIENEKFFLWVNNTGPSGIISPRGEVIKSIDYGSRGILLFSF.

Transmembrane regions (helical) follow at residues L13 to F33, L47 to I67, F75 to L95, Y97 to V117, N149 to F169, and I175 to Y195. The region spanning I207–F439 is the CN hydrolase domain. The active-site Proton acceptor is E248. Residue K305 is part of the active site. C355 serves as the catalytic Nucleophile.

This sequence belongs to the CN hydrolase family. Apolipoprotein N-acyltransferase subfamily.

The protein localises to the cell inner membrane. The catalysed reaction is N-terminal S-1,2-diacyl-sn-glyceryl-L-cysteinyl-[lipoprotein] + a glycerophospholipid = N-acyl-S-1,2-diacyl-sn-glyceryl-L-cysteinyl-[lipoprotein] + a 2-acyl-sn-glycero-3-phospholipid + H(+). It functions in the pathway protein modification; lipoprotein biosynthesis (N-acyl transfer). Catalyzes the phospholipid dependent N-acylation of the N-terminal cysteine of apolipoprotein, the last step in lipoprotein maturation. In Aquifex aeolicus (strain VF5), this protein is Apolipoprotein N-acyltransferase.